The following is a 432-amino-acid chain: Homogentisate 1,2-dioxygenase (432 aa).

Histidine 287 serves as the catalytic Proton acceptor. Fe cation contacts are provided by histidine 330 and glutamate 336. Homogentisate is bound by residues tyrosine 345 and histidine 366. Histidine 366 is a binding site for Fe cation.

Belongs to the homogentisate dioxygenase family. In terms of assembly, hexamer; dimer of trimers. The cofactor is Fe cation.

It carries out the reaction homogentisate + O2 = 4-maleylacetoacetate + H(+). It participates in amino-acid degradation; L-phenylalanine degradation; acetoacetate and fumarate from L-phenylalanine: step 4/6. Functionally, involved in the catabolism of homogentisate (2,5-dihydroxyphenylacetate or 2,5-OH-PhAc), a central intermediate in the degradation of phenylalanine and tyrosine. Catalyzes the oxidative ring cleavage of the aromatic ring of homogentisate to yield maleylacetoacetate. The protein is Homogentisate 1,2-dioxygenase of Pseudomonas aeruginosa (strain UCBPP-PA14).